The primary structure comprises 657 residues: Forkhead box protein O3 (657 aa).

Disordered stretches follow at residues 1 to 71 (MAEA…EGAA) and 216 to 320 (SSWW…ELDD). The segment at residues 142–236 (WGNMSYADLI…KGGKAPRRRA (95 aa)) is a DNA-binding region (fork-head). Positions 246–257 (TKSRGRAAKKKA) are enriched in basic residues. Positions 268-283 (DSPSQLSKWPGSPTSR) are enriched in polar residues. Basic and acidic residues predominate over residues 284–296 (SSDKLDTWTDFRS). Over residues 297–307 (RTNSNASTISG) the composition is skewed to polar residues.

Post-translationally, dephosphorylation may promote translocation to the nucleus where the protein induces transcription of target genes and triggers apoptosis. As to expression, localized to the animal hemisphere during early cleavage stages. At the late neurula, localized in the anterior neural plate, neural crest cells and in the hatching gland. As development progresses, expression becomes less localized, being observed in a variety of organs and tissues including the head, branchial arches and somites by stage 32.

Its subcellular location is the cytoplasm. It is found in the cytosol. The protein localises to the nucleus. Its function is as follows. Transcriptional activator that recognizes and binds to the DNA sequence 5'-[AG]TAAA[TC]A-3' and regulates different processes, such as apoptosis and autophagy. Acts as a positive regulator of autophagy in skeletal muscle: in starved cells, enters the nucleus following dephosphorylation and binds the promoters of autophagy genes, thereby activating their expression, resulting in proteolysis of skeletal muscle proteins. Triggers apoptosis in the absence of survival factors, including neuronal cell death upon oxidative stress. In response to metabolic stress, translocates into the mitochondria where it promotes mtDNA transcription. Also acts as a key regulator of chondrogenic commitment of skeletal progenitor cells in response to lipid availability: when lipids levels are low, translocates to the nucleus and promotes expression of sox9, which induces chondrogenic commitment and suppresses fatty acid oxidation. Also acts as a key regulator of regulatory T-cells (Treg) differentiation. This Xenopus laevis (African clawed frog) protein is Forkhead box protein O3.